Here is a 1464-residue protein sequence, read N- to C-terminus: Alpha-glucan water dikinase, chloroplastic (1464 aa).

A chloroplast-targeting transit peptide spans methionine 1 to alanine 77. The active-site Tele-phosphohistidine intermediate is histidine 1069.

This sequence belongs to the PEP-utilizing enzyme family. Homodimer. It depends on Mg(2+) as a cofactor. In terms of tissue distribution, expressed in leaves.

Its subcellular location is the plastid. The protein resides in the chloroplast. It catalyses the reaction [(1-&gt;4)-alpha-D-glucosyl](n) + n ATP + n H2O = [(1-&gt;4)-6-phospho-alpha-D-glucosyl](n) + n AMP + n phosphate + 2n H(+). The catalysed reaction is ATP + protein L-histidine = ADP + protein N-phospho-L-histidine.. In terms of biological role, mediates the incorporation of phosphate into starch-like alpha-glucan, mostly at the C-6 position of glucose units. Acts as an overall regulator of starch mobilization. Required for starch degradation, suggesting that the phosphate content of starch regulates its degradability. More active on alpha-1,6 branched amylopectin. In Solanum tuberosum (Potato), this protein is Alpha-glucan water dikinase, chloroplastic (R1).